The chain runs to 357 residues: tRNA N6-adenosine threonylcarbamoyltransferase (357 aa).

2 residues coordinate Fe cation: His-115 and His-119. Substrate-binding positions include Leu-137 to Gly-141, Asp-170, Gly-183, and Asn-281. Fe cation is bound at residue Asp-309.

The protein belongs to the KAE1 / TsaD family. The cofactor is Fe(2+).

It is found in the cytoplasm. The catalysed reaction is L-threonylcarbamoyladenylate + adenosine(37) in tRNA = N(6)-L-threonylcarbamoyladenosine(37) in tRNA + AMP + H(+). In terms of biological role, required for the formation of a threonylcarbamoyl group on adenosine at position 37 (t(6)A37) in tRNAs that read codons beginning with adenine. Is involved in the transfer of the threonylcarbamoyl moiety of threonylcarbamoyl-AMP (TC-AMP) to the N6 group of A37, together with TsaE and TsaB. TsaD likely plays a direct catalytic role in this reaction. The polypeptide is tRNA N6-adenosine threonylcarbamoyltransferase (Bradyrhizobium diazoefficiens (strain JCM 10833 / BCRC 13528 / IAM 13628 / NBRC 14792 / USDA 110)).